A 250-amino-acid chain; its full sequence is NAD(P)H-quinone oxidoreductase subunit K (250 aa).

4 residues coordinate [4Fe-4S] cluster: C63, C64, C128, and C159.

The protein belongs to the complex I 20 kDa subunit family. NDH-1 can be composed of about 15 different subunits; different subcomplexes with different compositions have been identified which probably have different functions. Requires [4Fe-4S] cluster as cofactor.

The protein resides in the cellular thylakoid membrane. The enzyme catalyses a plastoquinone + NADH + (n+1) H(+)(in) = a plastoquinol + NAD(+) + n H(+)(out). It carries out the reaction a plastoquinone + NADPH + (n+1) H(+)(in) = a plastoquinol + NADP(+) + n H(+)(out). Functionally, NDH-1 shuttles electrons from an unknown electron donor, via FMN and iron-sulfur (Fe-S) centers, to quinones in the respiratory and/or the photosynthetic chain. The immediate electron acceptor for the enzyme in this species is believed to be plastoquinone. Couples the redox reaction to proton translocation, and thus conserves the redox energy in a proton gradient. Cyanobacterial NDH-1 also plays a role in inorganic carbon-concentration. This chain is NAD(P)H-quinone oxidoreductase subunit K, found in Rippkaea orientalis (strain PCC 8801 / RF-1) (Cyanothece sp. (strain PCC 8801)).